The sequence spans 1242 residues: DNA polymerase catalytic subunit (1242 aa).

Disordered regions lie at residues 14–38 (GAVA…RPPQ), 644–665 (LQSA…SSSS), and 1109–1162 (APQG…RKPP). Low complexity predominate over residues 653–665 (GVSPGSGSNSSSS). The span at 1111-1125 (QGSSDNGDSVTTGVV) shows a compositional bias: polar residues. The segment covering 1145–1155 (ESNRRGGEPAK) has biased composition (basic and acidic residues).

Belongs to the DNA polymerase type-B family. In terms of assembly, forms a complex with the ssDNA-binding protein UL57, the DNA polymerase processivity factor UL44, and the alkaline exonuclease UL98. Interacts with the putative helicase-primase complex composed of UL70, UL102 and UL105 proteins; these interactions may coordinate leading and lagging strand DNA synthesis at the replication fork.

The protein localises to the host nucleus. It catalyses the reaction DNA(n) + a 2'-deoxyribonucleoside 5'-triphosphate = DNA(n+1) + diphosphate. Functionally, replicates viral genomic DNA in the late phase of lytic infection, producing long concatemeric DNA. The replication complex is composed of six viral proteins: the DNA polymerase, processivity factor, primase, primase-associated factor, helicase, and ssDNA-binding protein. This is DNA polymerase catalytic subunit (UL54) from Homo sapiens (Human).